Reading from the N-terminus, the 284-residue chain is MDISDIGRKLSLDNNKLLIRKAAEIRRLCDAQFDSSIIGVGEICKAVICLEIAATRLQIIFDRQAAVKLSGMSEKAYSRSFNSLQNVIGIKIKLNVRELAVQFGCVRVIKSVQNVLSSYKERFLASLPASRRANADFTRPVFTAAAFYLCAKKQKLKVDKLRLIEVCGTSESEFSCVSTSMTDLCFDCVGISKEKKDAKDVKGNRDLLDVLPGKRRLEDGGYSSGDESSCYKRHKKMEEAKYEDWKSTVVNSIKKNPEKGTKRVIQASLNFPKKSETKELQVDS.

It belongs to the ORC6 family. As to quaternary structure, component of the origin recognition complex (ORC) composed of at least ORC1 (ORC1A or ORC1B), ORC2, ORC3, ORC4, ORC5 and ORC6. ORC is regulated in a cell-cycle and development dependent manner. It is sequentially assembled at the exit from anaphase of mitosis and disassembled as cells enter S phase. Interacts directly with ORC2, ORC3, ORC4 and ORC5. As to expression, follow a cell-cycle regulation with a peak at the G1/S-phase. Mostly expressed in siliques, flowers, flower buds and mature leaves, and, to a lower exent, in roots, leaves and stems.

Its subcellular location is the nucleus. Functionally, component of the origin recognition complex (ORC) that binds origins of replication. DNA-binding is ATP-dependent. The specific DNA sequences that define origins of replication have not been identified yet. ORC is required to assemble the pre-replication complex necessary to initiate DNA replication. This chain is Origin of replication complex subunit 6, found in Arabidopsis thaliana (Mouse-ear cress).